The chain runs to 135 residues: Large ribosomal subunit protein uL18 (135 aa).

Positions 1 to 25 are disordered; sequence MAQTENQKSKRIPLGKDVSTQRRLS.

It belongs to the universal ribosomal protein uL18 family. Part of the 50S ribosomal subunit; part of the 5S rRNA/L5/L18/L25 subcomplex. Contacts the 5S and 23S rRNAs.

Its function is as follows. This is one of the proteins that bind and probably mediate the attachment of the 5S RNA into the large ribosomal subunit, where it forms part of the central protuberance. This is Large ribosomal subunit protein uL18 from Nocardia farcinica (strain IFM 10152).